The primary structure comprises 361 residues: MCMTMMSDISQDLLEEILSRVPITSLRAVKSTCKRWKDLLNDPSFSKKYGGKRDNEFLAIMTSGSRASLMSVNLHGPRDNKDLEDPFIKQIGELNQDQIFKVFHCDGLLLCITNEDNTRLVVWNPYLAQTRCIQPIDKFYIYDWYCLGYDKDKNHKILVVYSPMFGRIEYEIYSFLSKSWIVLSFPTDWQISRDECLSLKGNTYFIAYKKMEVEEVGFQEFLLCFDFTNERFGPLLPLPFQCYNQTSLVLSTVQEEQLAVLCKRCDAYETKIWITTKIEPNAVSWSYFLKFDFKVDISGGSFFVDVEEKVAVLFCINREKEKGINNKTYMIGEDGYYKEVDLGESNWCPSMCSYVPSCVQV.

Positions 3 to 49 constitute an F-box domain; the sequence is MTMMSDISQDLLEEILSRVPITSLRAVKSTCKRWKDLLNDPSFSKKY.

This is Putative F-box protein At3g19560 from Arabidopsis thaliana (Mouse-ear cress).